We begin with the raw amino-acid sequence, 208 residues long: Thymidylate kinase (208 aa).

Position 10-17 (10-17 (GPEGSGKT)) interacts with ATP.

The protein belongs to the thymidylate kinase family.

It carries out the reaction dTMP + ATP = dTDP + ADP. In terms of biological role, phosphorylation of dTMP to form dTDP in both de novo and salvage pathways of dTTP synthesis. The polypeptide is Thymidylate kinase (Bacillus cereus (strain AH187)).